The sequence spans 432 residues: Probable exopolygalacturonase X (432 aa).

A signal peptide spans 1-23 (MKFSYSFVQVVTLLLSLSPSVEG). Asn113, Asn129, and Asn199 each carry an N-linked (GlcNAc...) asparagine glycan. Residues 231 to 252 (SDNIVIQNSVINNGDDCVSFKP) form a PbH1 1 repeat. The active-site Proton donor is Asp245. Cys247 and Cys264 are disulfide-bonded. Residues Asn253 and Asn265 are each glycosylated (N-linked (GlcNAc...) asparagine). PbH1 repeat units follow at residues 254–274 (STNILVQNLHCNGSHGISVGS), 285–306 (VQNVLVYNISMYNASDGARIKV), and 327–348 (VKNVTYNQMYIENVDWAIEVTQ). His268 is an active-site residue. N-linked (GlcNAc...) asparagine glycosylation is found at Asn292, Asn297, Asn329, Asn354, and Asn364. A PbH1 5 repeat occupies 362-394 (PSNLTISDIHFKNFRGTTSGKRDPNVGTIVCSS). A disulfide bridge links Cys392 with Cys398.

The protein belongs to the glycosyl hydrolase 28 family.

It localises to the secreted. The enzyme catalyses [(1-&gt;4)-alpha-D-galacturonosyl](n) + H2O = alpha-D-galacturonate + [(1-&gt;4)-alpha-D-galacturonosyl](n-1). Specific in hydrolyzing the terminal glycosidic bond of polygalacturonic acid and oligogalacturonates. This Aspergillus fumigatus (strain CBS 144.89 / FGSC A1163 / CEA10) (Neosartorya fumigata) protein is Probable exopolygalacturonase X (pgaX).